The following is a 92-amino-acid chain: Small ribosomal subunit protein uS19 (92 aa).

This sequence belongs to the universal ribosomal protein uS19 family.

Its function is as follows. Protein S19 forms a complex with S13 that binds strongly to the 16S ribosomal RNA. The chain is Small ribosomal subunit protein uS19 from Sinorhizobium medicae (strain WSM419) (Ensifer medicae).